The following is a 501-amino-acid chain: Mitogen-activated protein kinase 16 (501 aa).

Positions 22-313 (YEVTEVVGKG…AAEALTDPYF (292 aa)) constitute a Protein kinase domain. ATP contacts are provided by residues 28-36 (VGKGSYGVV) and K51. The active-site Proton acceptor is the D148. T184 is subject to Phosphothreonine. The TXY signature appears at 184–186 (TDY). Position 186 is a phosphotyrosine (Y186). Residues 477–501 (DEESMSEYMNEAADGVPHKIAQLKT) form a disordered region.

It belongs to the protein kinase superfamily. CMGC Ser/Thr protein kinase family. MAP kinase subfamily. Dually phosphorylated on Thr-184 and Tyr-186, which activates the enzyme.

The enzyme catalyses L-seryl-[protein] + ATP = O-phospho-L-seryl-[protein] + ADP + H(+). The catalysed reaction is L-threonyl-[protein] + ATP = O-phospho-L-threonyl-[protein] + ADP + H(+). With respect to regulation, activated by threonine and tyrosine phosphorylation. This is Mitogen-activated protein kinase 16 (MPK16) from Oryza sativa subsp. japonica (Rice).